The primary structure comprises 963 residues: Glycine dehydrogenase (decarboxylating) (963 aa).

The residue at position 710 (Lys710) is an N6-(pyridoxal phosphate)lysine.

This sequence belongs to the GcvP family. In terms of assembly, the glycine cleavage system is composed of four proteins: P, T, L and H. The cofactor is pyridoxal 5'-phosphate.

The enzyme catalyses N(6)-[(R)-lipoyl]-L-lysyl-[glycine-cleavage complex H protein] + glycine + H(+) = N(6)-[(R)-S(8)-aminomethyldihydrolipoyl]-L-lysyl-[glycine-cleavage complex H protein] + CO2. The glycine cleavage system catalyzes the degradation of glycine. The P protein binds the alpha-amino group of glycine through its pyridoxal phosphate cofactor; CO(2) is released and the remaining methylamine moiety is then transferred to the lipoamide cofactor of the H protein. The polypeptide is Glycine dehydrogenase (decarboxylating) (Pseudoalteromonas translucida (strain TAC 125)).